The chain runs to 190 residues: Threonylcarbamoyl-AMP synthase (190 aa).

The region spanning 7-190 is the YrdC-like domain; sequence RAALSDVLQA…ALTGKQFRQG (184 aa).

Belongs to the SUA5 family. TsaC subfamily.

Its subcellular location is the cytoplasm. It carries out the reaction L-threonine + hydrogencarbonate + ATP = L-threonylcarbamoyladenylate + diphosphate + H2O. Its function is as follows. Required for the formation of a threonylcarbamoyl group on adenosine at position 37 (t(6)A37) in tRNAs that read codons beginning with adenine. Catalyzes the conversion of L-threonine, HCO(3)(-)/CO(2) and ATP to give threonylcarbamoyl-AMP (TC-AMP) as the acyladenylate intermediate, with the release of diphosphate. The chain is Threonylcarbamoyl-AMP synthase from Yersinia enterocolitica serotype O:8 / biotype 1B (strain NCTC 13174 / 8081).